Reading from the N-terminus, the 1289-residue chain is Outer capsid protein lambda-2 (1289 aa).

893–900 (GAAAAGKS) contacts ATP.

The protein belongs to the orthoreovirus lambda-2 protein family. As to quaternary structure, interacts with protein mu-NS; in viral inclusions.

The protein localises to the virion. The enzyme catalyses a 5'-end diphospho-ribonucleoside in mRNA + GTP + H(+) = a 5'-end (5'-triphosphoguanosine)-ribonucleoside in mRNA + diphosphate. It catalyses the reaction a 5'-end (5'-triphosphoguanosine)-ribonucleoside in mRNA + S-adenosyl-L-methionine = a 5'-end (N(7)-methyl 5'-triphosphoguanosine)-ribonucleoside in mRNA + S-adenosyl-L-homocysteine. Outer capsid protein involved in mRNA capping. Catalyzes the last 3 enzymatic activities for formation of the 5' cap structure on the viral plus-strand transcripts, namely the RNA guanylyltransferase, RNA-7N- and RNA-2'O-methyltransferase activities. This is Outer capsid protein lambda-2 (L2) from Reovirus type 1 (strain Lang) (T1L).